Here is a 193-residue protein sequence, read N- to C-terminus: dCTP deaminase (193 aa).

Residues 110 to 115, Asp128, 136 to 138, Tyr171, Lys178, and Gln182 each bind dCTP; these read RSSLAR and VLE. Glu138 serves as the catalytic Proton donor/acceptor. Residues 169-193 are disordered; that stretch reads RPYNRRQDAKYKDQQGAVASRIDKD.

This sequence belongs to the dCTP deaminase family. In terms of assembly, homotrimer.

It carries out the reaction dCTP + H2O + H(+) = dUTP + NH4(+). Its pathway is pyrimidine metabolism; dUMP biosynthesis; dUMP from dCTP (dUTP route): step 1/2. In terms of biological role, catalyzes the deamination of dCTP to dUTP. The chain is dCTP deaminase from Pectobacterium carotovorum subsp. carotovorum (strain PC1).